Here is a 383-residue protein sequence, read N- to C-terminus: Chitinase-3-like protein 1 (383 aa).

Positions 1–21 (MGLRVAQTGFVALVLLQSCAA) are cleaved as a signal peptide. Residues 22–383 (YKLVCYYTSW…SAIKDVLAAA (362 aa)) form the GH18 domain. A disulfide bridge connects residues Cys26 and Cys51. N-linked (GlcNAc...) asparagine glycosylation occurs at Asn60. Chitin-binding positions include 70–71 (EW), 97–100 (GGWN), Tyr141, 204–207 (LTYD), and Arg263. A disulfide bond links Cys300 and Cys364. Positions 324–338 (QWVGYDDQESVKNKA) are important for AKT1 activation and IL8 production. A chitin-binding site is contributed by Trp352.

Belongs to the glycosyl hydrolase 18 family. Monomer. As to expression, detected in smooth muscle cells in atherosclerotic plaques. Detected in regions of vascular occlusion in the aorta.

It localises to the secreted. It is found in the extracellular space. Its subcellular location is the cytoplasm. The protein resides in the perinuclear region. The protein localises to the endoplasmic reticulum. Carbohydrate-binding lectin with a preference for chitin. Has no chitinase activity. May play a role in tissue remodeling and in the capacity of cells to respond to and cope with changes in their environment. Plays a role in T-helper cell type 2 (Th2) inflammatory response and IL-13-induced inflammation, regulating allergen sensitization, inflammatory cell apoptosis, dendritic cell accumulation and M2 macrophage differentiation. Facilitates invasion of pathogenic enteric bacteria into colonic mucosa and lymphoid organs. Mediates activation of AKT1 signaling pathway and subsequent IL8 production in colonic epithelial cells. Regulates antibacterial responses in lung by contributing to macrophage bacterial killing, controlling bacterial dissemination and augmenting host tolerance. Also regulates hyperoxia-induced injury, inflammation and epithelial apoptosis in lung. Stimulates migration and adhesion of cultured vascular smooth muscle cells. This is Chitinase-3-like protein 1 (CHI3L1) from Sus scrofa (Pig).